The sequence spans 395 residues: FAD-dependent monooxygenase cctM (395 aa).

The N-terminal stretch at 1–23 is a signal peptide; sequence MEPGTDVRRVLVIGAGAAGLLIA. FAD-binding residues include E37, G52, and R112. N138 and N298 each carry an N-linked (GlcNAc...) asparagine glycan. An FAD-binding site is contributed by D306.

Belongs to the paxM FAD-dependent monooxygenase family. It depends on FAD as a cofactor.

It participates in mycotoxin biosynthesis. FAD-dependent monooxygenase; part of the gene cluster that mediates the biosynthesis of the mycotoxin cyclochlorotine, a hepatotoxic and carcinogenic cyclic chlorinated pentapeptide. The function of cctM within the pathway, if any, remains undetermined. The NRPS cctN initially catalyzes the condensation of L-serine (Ser), Pro, L-2-aminobutyrate (2Abu), Ser, and beta-Phe in this order to produce isocyclotine. After the dichlorination of Pro2 catalyzed by cctP2 to produce isocyclochlorotine, the cctO-mediated transacylation of isocyclochlorotine can furnish cyclochlorotine. The subsequent hydroxylation of cyclochlorotine by cctR yields hydroxycyclochlorotine as the final product. CctP1 probably acts as a phenylalanine aminomutase and provides the uncommon building block beta-Phe. Furthermore, 2Abu can be synthesized from threonine by one of the threonine dehydratases and transaminases localized outside of the cluster. The functions of the remaining proteins encoded by the cluster, cctM and cctT, have not been identified yet. This is FAD-dependent monooxygenase cctM from Talaromyces islandicus (Penicillium islandicum).